Consider the following 24-residue polypeptide: Myotoxin TmC4-47.2 (24 aa).

Residues 1–24 (KASSSAPKGWTHHGSRFTFHRGSM) are disordered. A compositionally biased stretch (basic residues) spans 10–24 (WTHHGSRFTFHRGSM). A C-type lectin domain is found at 13 to 24 (HGSRFTFHRGSM).

Expressed by the venom gland.

The protein localises to the secreted. In terms of biological role, able to depolarize frog skeletal muscle fibers, but has no effects on squid giant axons. Tetrodotoxin is able to partially antagonize the depolarization. Induces myonecrosis. The chain is Myotoxin TmC4-47.2 from Thalassophryne maculosa (Cano toadfish).